The primary structure comprises 59 residues: Large ribosomal subunit protein uL30 (59 aa).

It belongs to the universal ribosomal protein uL30 family. In terms of assembly, part of the 50S ribosomal subunit.

The protein is Large ribosomal subunit protein uL30 of Edwardsiella ictaluri (strain 93-146).